A 149-amino-acid polypeptide reads, in one-letter code: Arginine repressor (149 aa).

This sequence belongs to the ArgR family.

The protein resides in the cytoplasm. The protein operates within amino-acid biosynthesis; L-arginine biosynthesis [regulation]. In terms of biological role, regulates arginine biosynthesis genes. The sequence is that of Arginine repressor from Geobacillus sp. (strain WCH70).